Reading from the N-terminus, the 460-residue chain is MASRFFALLLLAIPIQAQSPVWGQCGGIGWSGPTTCVGGATCVSYNPYYSQCIPSTQASSSIASTTLVTSFTTTTATRTSASTPPASSTGAGGATCSALPGSITLRSNAKLNDLFTMFNGDKVTTKDKFSCRQAEMSELIQRYELGTLPGRPSTLTASFSGNTLTINCGEAGKSISFTVTITYPSSGTAPYPAIIGYGGGSLPAPAGVAMINFNNDNIAAQVNTGSRGQGKFYDLYGSSHSAGAMTAWAWGVSRVIDALELVPGARIDTTKIGVTGCSRNGKGAMVAGAFEKRIVLTLPQESGAGGSACWRISDYLKSQGANIQTASEIIGEDPWFSTTFNSYVNQVPVLPFDHHSLAALIAPRGLFVIDNNIDWLGPQSCFGCMTAAHMAWQALGVSDHMGYSQIGAHAHCAFPSNQQSQLTAFVQKFLLGQSTNTAIFQSDFSANQSQWIDWTTPTLS.

Positions 1–17 (MASRFFALLLLAIPIQA) are cleaved as a signal peptide. Pyrrolidone carboxylic acid is present on Q18. The 36-residue stretch at 18–53 (QSPVWGQCGGIGWSGPTTCVGGATCVSYNPYYSQCI) folds into the CBM1 domain. Cystine bridges form between C96/C131, C277/C412, and C309/C384. The short motif at 276–281 (GCSRNG) is the GXSYXG catalytic site motif element. S278 serves as the catalytic Nucleophile. Substrate is bound by residues K282, Q324, E332, and W375. H411 functions as the Proton donor/acceptor in the catalytic mechanism. A glycan (N-linked (GlcNAc...) asparagine) is linked at N447.

The protein belongs to the carbohydrate esterase 15 (CE15) family.

The protein resides in the secreted. The catalysed reaction is a 4-O-methyl-alpha-D-glucuronosyl ester derivative + H2O = 4-O-methyl-alpha-D-glucuronate derivative + an alcohol + H(+). Its function is as follows. Glucuronoyl esterase which may play a significant role in biomass degradation, as it is considered to disconnect hemicellulose from lignin through the hydrolysis of the ester bond between 4-O-methyl-D-glucuronic acid residues of glucuronoxylans and aromatic alcohols of lignin. Does not hydrolyze substrates of other carbohydrate esterases such as acetylxylan esterase, acetyl esterase and feruloyl esterase. This is 4-O-methyl-glucuronoyl methylesterase from Hypocrea jecorina (strain QM6a) (Trichoderma reesei).